Consider the following 116-residue polypeptide: Holo-[acyl-carrier-protein] synthase (116 aa).

2 residues coordinate Mg(2+): Asp5 and Glu50.

Belongs to the P-Pant transferase superfamily. AcpS family. Requires Mg(2+) as cofactor.

Its subcellular location is the cytoplasm. The catalysed reaction is apo-[ACP] + CoA = holo-[ACP] + adenosine 3',5'-bisphosphate + H(+). Transfers the 4'-phosphopantetheine moiety from coenzyme A to a Ser of acyl-carrier-protein. In Campylobacter lari (strain RM2100 / D67 / ATCC BAA-1060), this protein is Holo-[acyl-carrier-protein] synthase.